Reading from the N-terminus, the 805-residue chain is Ubiquitin carboxyl-terminal hydrolase 10 (805 aa).

Residues 139–170 form a disordered region; sequence DGSGNADSDGTSGTGQRERKKKKKRPPGYYSY. A compositionally biased stretch (polar residues) spans 143 to 153; sequence NADSDGTSGTG. The USP domain occupies 422 to 802; sequence RGLINKGNWC…TAYLLYYRRV (381 aa). Cys431 acts as the Nucleophile in catalysis. The disordered stretch occupies residues 561–593; sequence HINNGPDPVSEKEEINKDEQEGSDEEWEQVGPR. Residues 569-580 show a composition bias toward basic and acidic residues; the sequence is VSEKEEINKDEQ. His756 serves as the catalytic Proton acceptor.

The protein belongs to the peptidase C19 family. USP10 subfamily.

It is found in the cytoplasm. The protein localises to the nucleus. The catalysed reaction is Thiol-dependent hydrolysis of ester, thioester, amide, peptide and isopeptide bonds formed by the C-terminal Gly of ubiquitin (a 76-residue protein attached to proteins as an intracellular targeting signal).. Functionally, hydrolase that can remove conjugated ubiquitin from target proteins such as p53/tp53, rps2/us5, rps3/us3, rps10/eS10, becn1, snx3 and cftr. Acts as an essential regulator of p53/tp53 stability: in unstressed cells, specifically deubiquitinates p53/tp53 in the cytoplasm, leading to counteracts MDM2 action and stabilize p53/tp53. Following DNA damage, translocates to the nucleus and deubiquitinates p53/tp53, leading to regulate the p53/TP53-dependent DNA damage response. Component of a regulatory loop that controls autophagy and p53/tp53 levels. Plays a key role in 40S ribosome subunit recycling when a ribosome has stalled during translation: acts both by inhibiting formation of stress granules, which store stalled translation pre-initiation complexes, and mediating deubiquitination of 40S ribosome subunits. Deubiquitinates cftr in early endosomes, enhancing its endocytic recycling. In Xenopus tropicalis (Western clawed frog), this protein is Ubiquitin carboxyl-terminal hydrolase 10 (usp10).